The sequence spans 743 residues: NAD(P)H-quinone oxidoreductase subunit 5, chloroplastic (743 aa).

16 consecutive transmembrane segments (helical) span residues 9 to 29 (WIIP…LLLF), 40 to 60 (WAFQ…NLSI), 89 to 109 (IDPL…LVLI), 125 to 145 (FAYM…SNLI), 147 to 167 (IYIF…FWFT), 185 to 205 (GDFG…SFEF), 219 to 239 (NEVN…GAIA), 258 to 278 (TPIS…FLVA), 283 to 303 (LFIV…ITVF), 327 to 347 (LGYM…FHLI), 354 to 374 (ALLF…VGYC), 396 to 416 (ISFL…CFWS), 425 to 445 (WLYS…TAFY), 548 to 568 (LFPI…GIPF), 607 to 627 (VFSV…YKPV), and 723 to 743 (YLFF…FFNL).

Belongs to the complex I subunit 5 family. In terms of assembly, NDH is composed of at least 16 different subunits, 5 of which are encoded in the nucleus.

It localises to the plastid. The protein localises to the chloroplast thylakoid membrane. The enzyme catalyses a plastoquinone + NADH + (n+1) H(+)(in) = a plastoquinol + NAD(+) + n H(+)(out). It catalyses the reaction a plastoquinone + NADPH + (n+1) H(+)(in) = a plastoquinol + NADP(+) + n H(+)(out). Its function is as follows. NDH shuttles electrons from NAD(P)H:plastoquinone, via FMN and iron-sulfur (Fe-S) centers, to quinones in the photosynthetic chain and possibly in a chloroplast respiratory chain. The immediate electron acceptor for the enzyme in this species is believed to be plastoquinone. Couples the redox reaction to proton translocation, and thus conserves the redox energy in a proton gradient. This chain is NAD(P)H-quinone oxidoreductase subunit 5, chloroplastic (ndhF), found in Carthamus tinctorius (Safflower).